Here is a 323-residue protein sequence, read N- to C-terminus: Serine/threonine-protein phosphatase PP1-gamma catalytic subunit (323 aa).

Residue alanine 2 is modified to N-acetylalanine. Aspartate 64, histidine 66, aspartate 92, and asparagine 124 together coordinate Mn(2+). The active-site Proton donor is histidine 125. Mn(2+) contacts are provided by histidine 173 and histidine 248. Phosphothreonine is present on residues threonine 307 and threonine 311.

Belongs to the PPP phosphatase family. PP-1 subfamily. As to quaternary structure, PP1 comprises a catalytic subunit, PPP1CA, PPP1CB or PPP1CC, which is folded into its native form by inhibitor 2 and glycogen synthetase kinase 3, and then complexed to one or several targeting or regulatory subunits. PPP1R12A, PPP1R12B and PPP1R12C mediate binding to myosin. PPP1R3A (in skeletal muscle), PPP1R3B (in liver), PPP1R3C, PPP1R3D and PPP1R3F (in brain) mediate binding to glycogen. PPP1R15A and PPP1R15B mediate binding to EIF2S1. Part of a complex containing PPP1R15B, PP1 and NCK1/2. Interacts with PPP1R3B, PPP1R7 and CDCA2. Interacts with IKFZ1; the interaction targets PPP1CC to pericentromeric heterochromatin, dephosphorylates IKAROS, stabilizes it and prevents it from degradation. Interacts with NOM1 and PPP1R8. Component of the PTW/PP1 phosphatase complex, composed of PPP1R10/PNUTS, TOX4, WDR82, and PPP1CA or PPP1CB or PPP1CC. Interacts with PPP1R8. Interacts with NEK2. Interacts with PPP1R42; the interaction is direct. Interacts with URI1; the interaction is phosphorylation-dependent and occurs in a growth factor-dependent manner. Interacts with FOXP3. Interacts with TMEM225 (via RVxF motif). Interacts with MKI67. Interacts with RRP1B; this targets PPP1CC to the nucleolus. Interacts with DYNLT4. Interacts (via RVxF motif) with FIRRM; regulates PLK1 kinase activity. Interacts with the KNL1 complex subunit KNL1; the interaction is direct and mutually exclusive with KNL1 binding to microtubules. Component of the SHOC2-MRAS-PP1c (SMP) complex consisting of SHOC2, GTP-bound M-Ras/MRAS and the catalytic subunit of protein phosphatase 1 (either PPP1CA, PPP1CB or PPP1CC). SHOC2 and PP1c preferably bind M-Ras/MRAS, but they also bind K-Ras/KRAS, N-Ras/NRAS and H-Ras/HRAS; these interactions are GTP-dependent and both SHOC2 and PP1c are required to form a stable complex. Interacts with SHOC2 in the absence of Ras GTPases. Mn(2+) serves as cofactor. Phosphorylated by NEK2.

The protein resides in the cytoplasm. It localises to the nucleus. The protein localises to the cleavage furrow. Its subcellular location is the nucleolus. It is found in the nucleoplasm. The protein resides in the chromosome. It localises to the centromere. The protein localises to the kinetochore. Its subcellular location is the nucleus speckle. It is found in the midbody. The protein resides in the mitochondrion. It localises to the cytoskeleton. The protein localises to the microtubule organizing center. It carries out the reaction O-phospho-L-seryl-[protein] + H2O = L-seryl-[protein] + phosphate. The enzyme catalyses O-phospho-L-threonyl-[protein] + H2O = L-threonyl-[protein] + phosphate. Its activity is regulated as follows. Inactivated by binding to URI1. Protein phosphatase that associates with over 200 regulatory proteins to form highly specific holoenzymes which dephosphorylate hundreds of biological targets. Protein phosphatase 1 (PP1) is essential for cell division, and participates in the regulation of glycogen metabolism, muscle contractility and protein synthesis. Dephosphorylates RPS6KB1. Involved in regulation of ionic conductances and long-term synaptic plasticity. May play an important role in dephosphorylating substrates such as the postsynaptic density-associated Ca(2+)/calmodulin dependent protein kinase II. Component of the PTW/PP1 phosphatase complex, which plays a role in the control of chromatin structure and cell cycle progression during the transition from mitosis into interphase. Regulates the recruitment of the SKA complex to kinetochores. Core component of the SHOC2-MRAS-PP1c (SMP) holophosphatase complex that regulates the MAPK pathway activation. Dephosphorylates MKI67 at the onset of anaphase. The SMP complex specifically dephosphorylates the inhibitory phosphorylation at 'Ser-259' of RAF1 kinase, 'Ser-365' of BRAF kinase and 'Ser-214' of ARAF kinase, stimulating their kinase activities. The SMP complex enhances the dephosphorylation activity and substrate specificity of PP1c. This Canis lupus familiaris (Dog) protein is Serine/threonine-protein phosphatase PP1-gamma catalytic subunit (PPP1CC).